The following is a 55-amino-acid chain: Large ribosomal subunit protein bL33 (55 aa).

Belongs to the bacterial ribosomal protein bL33 family.

This is Large ribosomal subunit protein bL33 from Burkholderia ambifaria (strain MC40-6).